The following is a 473-amino-acid chain: Glutamine synthetase (473 aa).

The GS beta-grasp domain maps to 18–102 (NNIKWVDLQF…VLTKVFWGGG (85 aa)). In terms of domain architecture, GS catalytic spans 110-473 (PRGIAEEAEK…PMEIYQYLDS (364 aa)). 2 residues coordinate Mg(2+): E133 and E135. E207 provides a ligand contact to ATP. E212 and E220 together coordinate Mg(2+). Residues 264–265 (NG) and G265 each bind L-glutamate. H269 is a Mg(2+) binding site. Residues 271–273 (HFS) and S273 contribute to the ATP site. The L-glutamate site is built by R324, E330, and R342. The ATP site is built by R342, R347, and K357. E362 serves as a coordination point for Mg(2+). R364 contacts L-glutamate.

Belongs to the glutamine synthetase family. In terms of assembly, oligomer of 12 subunits arranged in the form of two hexagons. Mg(2+) serves as cofactor. Requires Mn(2+) as cofactor.

The protein resides in the cytoplasm. The enzyme catalyses L-glutamate + NH4(+) + ATP = L-glutamine + ADP + phosphate + H(+). With respect to regulation, strongly inhibited by glycine and L-alanine. AMP at 10 mM displays a very weak inhibitory effect. The activity of this enzyme is not controlled by adenylation. Its function is as follows. Probably involved in nitrogen metabolism via ammonium assimilation. Catalyzes the ATP-dependent biosynthesis of glutamine from glutamate and ammonia. The chain is Glutamine synthetase from Sulfolobus acidocaldarius (strain ATCC 33909 / DSM 639 / JCM 8929 / NBRC 15157 / NCIMB 11770).